The primary structure comprises 408 residues: DNA primase DnaG (408 aa).

One can recognise a Toprim domain in the interval 166–241 (EEIIIVEGRA…KIDYIARAPP (76 aa)). Glu-172, Asp-215, and Asp-217 together coordinate Mg(2+).

Belongs to the archaeal DnaG primase family. Forms a ternary complex with MCM helicase and DNA. Component of the archaeal exosome complex. It depends on Mg(2+) as a cofactor.

The catalysed reaction is ssDNA + n NTP = ssDNA/pppN(pN)n-1 hybrid + (n-1) diphosphate.. Its function is as follows. RNA polymerase that catalyzes the synthesis of short RNA molecules used as primers for DNA polymerase during DNA replication. Also part of the exosome, which is a complex involved in RNA degradation. Acts as a poly(A)-binding protein that enhances the interaction between heteromeric, adenine-rich transcripts and the exosome. This is DNA primase DnaG from Desulfurococcus amylolyticus (strain DSM 18924 / JCM 16383 / VKM B-2413 / 1221n) (Desulfurococcus kamchatkensis).